Here is a 76-residue protein sequence, read N- to C-terminus: Exodeoxyribonuclease 7 small subunit (76 aa).

This sequence belongs to the XseB family. Heterooligomer composed of large and small subunits.

Its subcellular location is the cytoplasm. It catalyses the reaction Exonucleolytic cleavage in either 5'- to 3'- or 3'- to 5'-direction to yield nucleoside 5'-phosphates.. Bidirectionally degrades single-stranded DNA into large acid-insoluble oligonucleotides, which are then degraded further into small acid-soluble oligonucleotides. This Staphylococcus aureus (strain MRSA252) protein is Exodeoxyribonuclease 7 small subunit.